Consider the following 436-residue polypeptide: Bifunctional IPC transferase and DIPP synthase (436 aa).

The interval 11–241 is mobA-like NTP transferase; sequence GVGAAVLAAG…LSEEMVLGWA (231 aa). CTP is bound by residues 17–19 and Lys-32; that span reads LAA. A CDP-alcohol phosphatidyltransferases region spans residues 242–435; the sequence is ASGNDGPVSR…RRLLALKRGR (194 aa). 3 helical membrane-spanning segments follow: residues 275-295, 349-371, and 397-417; these read VSLL…AGRL, AGTR…VSYT, and LAVL…LATG.

In the N-terminal section; belongs to the MobA family. It in the C-terminal section; belongs to the CDP-alcohol phosphatidyltransferase class-I family.

Its subcellular location is the membrane. It carries out the reaction 1D-myo-inositol 3-phosphate + CTP + H(+) = CDP-1L-myo-inositol + diphosphate. It catalyses the reaction CDP-1L-myo-inositol + 1D-myo-inositol 3-phosphate = bis(1L-myo-inositol) 3,1'-phosphate 1-phosphate + CMP + H(+). Its function is as follows. Involved in biosynthesis of di-myo-inositol phosphate (DIP), a widespread organic solute in microorganisms adapted to hot environments. Catalyzes the condensation of CTP and L-myo-inositol-1-phosphate into CDP-L-myo-inositol, as well as the biosynthesis of di-myo-inositol-1,3'-phosphate-1'-phosphate (DIPP) from CDP-L-myo-inositol and L-myo-inositol-1-phosphate. This chain is Bifunctional IPC transferase and DIPP synthase, found in Rubrobacter xylanophilus (strain DSM 9941 / JCM 11954 / NBRC 16129 / PRD-1).